Reading from the N-terminus, the 183-residue chain is MPAYHSKFDTELKVLPLGNTNMGKLPIRTNFKGPAPQTNQDDIIDEALTYFKPNIFFREFEIKGPADRTMIYLIFYITECLRKLQKSPNKIAGQKDLHALALSHLLPIPGENGFPLNSMYKAPQSKPDEDEMRAYLQQIRQEIGARLCDLAFPDPQDRPSKWWLCFARRRFMDKGLVGQGVNL.

The protein belongs to the ARPC3 family. Component of the Arp2/3 complex.

The protein resides in the cytoplasm. It is found in the cytoskeleton. Its function is as follows. Functions as a component of the Arp2/3 complex which is involved in regulation of actin polymerization and together with an activating nucleation-promoting factor (NPF) mediates the formation of branched actin networks. The chain is Probable actin-related protein 2/3 complex subunit 3 (arx-5) from Caenorhabditis elegans.